The sequence spans 306 residues: Homoserine kinase (306 aa).

Position 90 to 100 (90 to 100 (PLARGLGSSAS)) interacts with ATP.

This sequence belongs to the GHMP kinase family. Homoserine kinase subfamily.

It is found in the cytoplasm. The catalysed reaction is L-homoserine + ATP = O-phospho-L-homoserine + ADP + H(+). It participates in amino-acid biosynthesis; L-threonine biosynthesis; L-threonine from L-aspartate: step 4/5. In terms of biological role, catalyzes the ATP-dependent phosphorylation of L-homoserine to L-homoserine phosphate. The sequence is that of Homoserine kinase from Staphylococcus epidermidis (strain ATCC 35984 / DSM 28319 / BCRC 17069 / CCUG 31568 / BM 3577 / RP62A).